Reading from the N-terminus, the 593-residue chain is MDVAFPGMERHDEKNPPGDDGTKPTGGKKARPAIKIKWYWKGLILLVELCIGDYLLDRYVFGGVMLRTTIAYAVLARVGLDYKLHYGKDCWLARHPEEDLHHRNAQRVCTMLKWNGGLYLKAGQAVAMQGSVLPEEYQRMFGEMFDDAPHSSWSDVEKVIKQDFGGRSIEDVFGVAPSDQQGDSQFVFEREPRASASIAQVHYARLPDGRGLAVKVQRREISKQVSWDLWSMKLMTEYTAWVTGLPMGGMGQFVADRVMQETDFEHEASNSEKMADLIATDSSLRDRVYIPKVYREFTSKRVLTTEWVDAVQLWDRDAITGQVAPSRSATSDKPGLGLRLDDVMRTVVELFSAQMFSWGFVHCDPHPGNILVRQNPKRPDSAQVVLLDHGLYITMSDKLRRQYARFWKALVTNDDASLQRVSREWGMKSADAWADASLMRPYKNPSSSDDESGESWQRTKETPEERKQRMIDEAAAYLGDEGLFPRELLFLERNITIVQGNNRFLGSPVNRIKLIGSCALKAIRDDGQGKESIRERISTRVALLSLDLAFWWSAMKQYFGYGEGLEQELKEAEDRQLRETKDAVAELFGITVN.

Disordered regions lie at residues 1–29 (MDVA…GGKK) and 441–467 (PYKN…EERK). 2 stretches are compositionally biased toward basic and acidic residues: residues 8–22 (MERH…DDGT) and 457–467 (QRTKETPEERK).

Belongs to the protein kinase superfamily. ADCK protein kinase family.

ABC1 family protein; part of the gene cluster that mediates the biosynthesis of the lipopeptide antibiotics leucinostatins that show extensive biological activities, including antimalarial, antiviral, antibacterial, antifungal, and antitumor activities, as well as phytotoxic. The function of lcsO within the leucinostatins biosynthesis has not been identified yet. This chain is ABC1 family protein lscO, found in Purpureocillium lilacinum (Paecilomyces lilacinus).